A 98-amino-acid chain; its full sequence is Co-chaperonin GroES (98 aa).

The protein belongs to the GroES chaperonin family. As to quaternary structure, heptamer of 7 subunits arranged in a ring. Interacts with the chaperonin GroEL.

The protein resides in the cytoplasm. Functionally, together with the chaperonin GroEL, plays an essential role in assisting protein folding. The GroEL-GroES system forms a nano-cage that allows encapsulation of the non-native substrate proteins and provides a physical environment optimized to promote and accelerate protein folding. GroES binds to the apical surface of the GroEL ring, thereby capping the opening of the GroEL channel. This chain is Co-chaperonin GroES, found in Rhizobium leguminosarum bv. trifolii (strain WSM2304).